Reading from the N-terminus, the 370-residue chain is Phosphate-binding protein PstS 2 (370 aa).

A signal peptide spans M1–A22. C23 carries N-palmitoyl cysteine lipidation. The S-diacylglycerol cysteine moiety is linked to residue C23. Residues S54–A56, S84, D102, and S191–T193 contribute to the phosphate site.

Belongs to the PstS family. The complex is composed of two ATP-binding proteins (PstB), two transmembrane proteins (PstC and PstA) and a solute-binding protein (PstS).

It is found in the cell membrane. In terms of biological role, functions in inorganic phosphate uptake, although probably not the main uptake protein under phosphate starvation. Part of the ABC transporter complex PstSACB involved in phosphate import. This chain is Phosphate-binding protein PstS 2 (pstS2), found in Mycobacterium tuberculosis (strain ATCC 25618 / H37Rv).